Here is a 288-residue protein sequence, read N- to C-terminus: Tryptophan 2,3-dioxygenase (288 aa).

Residues 57 to 61 (FIIQH), tyrosine 119, and arginine 123 contribute to the substrate site. Residue histidine 246 coordinates heme. A substrate-binding site is contributed by threonine 260.

Belongs to the tryptophan 2,3-dioxygenase family. As to quaternary structure, homotetramer. Requires heme as cofactor.

It catalyses the reaction L-tryptophan + O2 = N-formyl-L-kynurenine. It functions in the pathway amino-acid degradation; L-tryptophan degradation via kynurenine pathway; L-kynurenine from L-tryptophan: step 1/2. In terms of biological role, heme-dependent dioxygenase that catalyzes the oxidative cleavage of the L-tryptophan (L-Trp) pyrrole ring and converts L-tryptophan to N-formyl-L-kynurenine. Catalyzes the oxidative cleavage of the indole moiety. In Pseudomonas aeruginosa (strain ATCC 15692 / DSM 22644 / CIP 104116 / JCM 14847 / LMG 12228 / 1C / PRS 101 / PAO1), this protein is Tryptophan 2,3-dioxygenase.